A 62-amino-acid chain; its full sequence is Conotoxin Sr5.7 (62 aa).

An N-terminal signal peptide occupies residues 1 to 22 (MRCLPVFVILLLLIASAPSVDA). Residues 23–44 (QLKTKDDVPLASFHDNAKGTQH) constitute a propeptide that is removed on maturation.

The protein belongs to the conotoxin T superfamily. Contains 2 disulfide bonds that can be either 'C1-C3, C2-C4' or 'C1-C4, C2-C3', since these disulfide connectivities have been observed for conotoxins with cysteine framework V (for examples, see AC P0DQQ7 and AC P81755). As to expression, expressed by the venom duct.

The protein localises to the secreted. The sequence is that of Conotoxin Sr5.7 from Conus spurius (Alphabet cone).